A 197-amino-acid chain; its full sequence is Recombination protein RecR (197 aa).

Residues 57-72 (CSTCFGITESDPCHLC) form a C4-type zinc finger. Residues 79-174 (ASICVVEEPQ…KVTRLAHGIP (96 aa)) form the Toprim domain.

This sequence belongs to the RecR family.

In terms of biological role, may play a role in DNA repair. It seems to be involved in an RecBC-independent recombinational process of DNA repair. It may act with RecF and RecO. In Geotalea uraniireducens (strain Rf4) (Geobacter uraniireducens), this protein is Recombination protein RecR.